Here is a 358-residue protein sequence, read N- to C-terminus: Chorismate synthase (358 aa).

Arginine 47 lines the NADP(+) pocket. Residues 124 to 126, 240 to 241, glycine 284, 299 to 303, and arginine 325 contribute to the FMN site; these read RSS, NA, and KPIAT.

This sequence belongs to the chorismate synthase family. As to quaternary structure, homotetramer. The cofactor is FMNH2.

The catalysed reaction is 5-O-(1-carboxyvinyl)-3-phosphoshikimate = chorismate + phosphate. It participates in metabolic intermediate biosynthesis; chorismate biosynthesis; chorismate from D-erythrose 4-phosphate and phosphoenolpyruvate: step 7/7. Its function is as follows. Catalyzes the anti-1,4-elimination of the C-3 phosphate and the C-6 proR hydrogen from 5-enolpyruvylshikimate-3-phosphate (EPSP) to yield chorismate, which is the branch point compound that serves as the starting substrate for the three terminal pathways of aromatic amino acid biosynthesis. This reaction introduces a second double bond into the aromatic ring system. The polypeptide is Chorismate synthase (Bacteroides thetaiotaomicron (strain ATCC 29148 / DSM 2079 / JCM 5827 / CCUG 10774 / NCTC 10582 / VPI-5482 / E50)).